The sequence spans 54 residues: Photoreceptor disk component PRCD (54 aa).

Residue Cys-2 is the site of S-palmitoyl cysteine attachment. The disordered stretch occupies residues 24–54; that stretch reads QPEPNGVDGAVSGSSLETDLQSSGREKEPLK. The segment covering 35-46 has biased composition (polar residues); sequence SGSSLETDLQSS.

The protein belongs to the PRCD family. In terms of assembly, interacts with RHO/rhodopsin; the interaction promotes PRCD stability. In terms of processing, palmitoylated at Cys-2. Palmitoylation is essential for protein stability and trafficking to the photoreceptor outer segment, but does not appear to be essential for membrane localization. Probably palmitoylated by ZDHHC3. Phosphorylated. In terms of tissue distribution, expressed in retina (at protein level).

It localises to the cell projection. The protein localises to the cilium. It is found in the photoreceptor outer segment. Its subcellular location is the membrane. The protein resides in the endoplasmic reticulum. It localises to the golgi apparatus. Involved in vision. This is Photoreceptor disk component PRCD from Bos taurus (Bovine).